A 130-amino-acid chain; its full sequence is NADH-quinone oxidoreductase subunit A (130 aa).

Helical transmembrane passes span 17–37 (YIFV…MLAL), 74–94 (LVGI…PWAV), and 99–119 (LGPA…VGFV).

It belongs to the complex I subunit 3 family. NDH-1 is composed of 14 different subunits. Subunits NuoA, H, J, K, L, M, N constitute the membrane sector of the complex.

The protein resides in the cell inner membrane. It catalyses the reaction a quinone + NADH + 5 H(+)(in) = a quinol + NAD(+) + 4 H(+)(out). Functionally, NDH-1 shuttles electrons from NADH, via FMN and iron-sulfur (Fe-S) centers, to quinones in the respiratory chain. The immediate electron acceptor for the enzyme in this species is believed to be ubiquinone. Couples the redox reaction to proton translocation (for every two electrons transferred, four hydrogen ions are translocated across the cytoplasmic membrane), and thus conserves the redox energy in a proton gradient. This Neorickettsia sennetsu (strain ATCC VR-367 / Miyayama) (Ehrlichia sennetsu) protein is NADH-quinone oxidoreductase subunit A.